The chain runs to 330 residues: 4-hydroxythreonine-4-phosphate dehydrogenase (330 aa).

Substrate contacts are provided by His-136 and Thr-137. His-166, His-211, and His-266 together coordinate a divalent metal cation. Substrate-binding residues include Lys-274, Asn-283, and Arg-292.

Belongs to the PdxA family. As to quaternary structure, homodimer. Zn(2+) serves as cofactor. Requires Mg(2+) as cofactor. The cofactor is Co(2+).

The protein resides in the cytoplasm. It catalyses the reaction 4-(phosphooxy)-L-threonine + NAD(+) = 3-amino-2-oxopropyl phosphate + CO2 + NADH. Its pathway is cofactor biosynthesis; pyridoxine 5'-phosphate biosynthesis; pyridoxine 5'-phosphate from D-erythrose 4-phosphate: step 4/5. Functionally, catalyzes the NAD(P)-dependent oxidation of 4-(phosphooxy)-L-threonine (HTP) into 2-amino-3-oxo-4-(phosphooxy)butyric acid which spontaneously decarboxylates to form 3-amino-2-oxopropyl phosphate (AHAP). This Erwinia tasmaniensis (strain DSM 17950 / CFBP 7177 / CIP 109463 / NCPPB 4357 / Et1/99) protein is 4-hydroxythreonine-4-phosphate dehydrogenase.